Consider the following 173-residue polypeptide: Large ribosomal subunit protein bL9 (173 aa).

Belongs to the bacterial ribosomal protein bL9 family.

In terms of biological role, binds to the 23S rRNA. This chain is Large ribosomal subunit protein bL9, found in Rickettsia bellii (strain OSU 85-389).